The following is a 270-amino-acid chain: Glucosamine-6-phosphate deaminase (270 aa).

The active-site Proton acceptor; for enolization step is the Asp-72. Asp-141 acts as the For ring-opening step in catalysis. His-143 (proton acceptor; for ring-opening step) is an active-site residue. Glu-148 functions as the For ring-opening step in the catalytic mechanism.

The protein belongs to the glucosamine/galactosamine-6-phosphate isomerase family. NagB subfamily.

The catalysed reaction is alpha-D-glucosamine 6-phosphate + H2O = beta-D-fructose 6-phosphate + NH4(+). Its pathway is amino-sugar metabolism; N-acetylneuraminate degradation; D-fructose 6-phosphate from N-acetylneuraminate: step 5/5. Its activity is regulated as follows. Allosterically activated by N-acetylglucosamine 6-phosphate (GlcNAc6P). Its function is as follows. Catalyzes the reversible isomerization-deamination of glucosamine 6-phosphate (GlcN6P) to form fructose 6-phosphate (Fru6P) and ammonium ion. This Bacteroides fragilis (strain ATCC 25285 / DSM 2151 / CCUG 4856 / JCM 11019 / LMG 10263 / NCTC 9343 / Onslow / VPI 2553 / EN-2) protein is Glucosamine-6-phosphate deaminase.